Reading from the N-terminus, the 365-residue chain is Protein Tob1 (365 aa).

Residues 22–39 (RRRVNIFGEELERLLKQK) carry the Bipartite nuclear localization signal motif. The segment at 82 to 92 (VRGNLPQDLSV) is important for nuclear localization. Residues 144–160 (DPASSVSSSPSPPFGHS) show a composition bias toward low complexity. The interval 144 to 171 (DPASSVSSSPSPPFGHSAAVSPTFMPRS) is disordered. The required for interaction with CPEB3 stretch occupies residues 161-220 (AAVSPTFMPRSTQPLTFTTATFAATKFGSTKMKNSGRSSKVARTSPISLGLNVNVNDLLK). A Phosphothreonine modification is found at Thr204. Positions 228 to 236 (MHSLYGLGL) match the Nuclear export signal motif. The interval 233 to 287 (GLGLGSQQQPQPQPQQPPSQPPPPPPPPQQQQQHQQQQQQQQQQQQQPQQQTSAL) is disordered. Positions 243-261 (QPQPQQPPSQPPPPPPPPQ) are enriched in pro residues. Residues 262–283 (QQQQHQQQQQQQQQQQQQPQQQ) are compositionally biased toward low complexity.

This sequence belongs to the BTG family. In terms of assembly, interacts with ERBB2. Interacts with CNOT7. Interacts with CPEB3 (via C-terminal RNA-binding region); recruits CNOT7 to CPEB3 to form a ternary complex required for mRNA deadenylation and decay. Interacts with CNOT8. Interacts with CPEB4. In terms of processing, phosphorylated on Ser and Thr residues.

The protein localises to the cytoplasm. It is found in the nucleus. In terms of biological role, anti-proliferative protein; the function is mediated by association with deadenylase subunits of the CCR4-NOT complex. Mediates CPEB3-accelerated mRNA deadenylation by binding to CPEB3 and recruiting CNOT7 which leads to target mRNA deadenylation and decay. This chain is Protein Tob1 (Tob1), found in Rattus norvegicus (Rat).